Reading from the N-terminus, the 800-residue chain is DNA mismatch repair protein MutS (800 aa).

ATP is bound at residue 616–623 (GPNMGGKS).

This sequence belongs to the DNA mismatch repair MutS family.

Its function is as follows. This protein is involved in the repair of mismatches in DNA. It is possible that it carries out the mismatch recognition step. This protein has a weak ATPase activity. The polypeptide is DNA mismatch repair protein MutS (Buchnera aphidicola subsp. Baizongia pistaciae (strain Bp)).